The chain runs to 745 residues: Receptor-type adenylate cyclase (745 aa).

Residues G1–L341 are Extracellular-facing. N15, N50, N189, and N312 each carry an N-linked (GlcNAc...) asparagine glycan. A helical transmembrane segment spans residues I342 to L362. The Cytoplasmic segment spans residues C363–V745. The Guanylate cyclase domain occupies T384 to E538. The Mg(2+) site is built by D389 and D432.

Belongs to the adenylyl cyclase class-3 family. The cofactor is Mg(2+).

It localises to the cell membrane. It carries out the reaction ATP = 3',5'-cyclic AMP + diphosphate. Could act as a receptor for an unknown ligand. The polypeptide is Receptor-type adenylate cyclase (Trypanosoma congolense).